The primary structure comprises 912 residues: Protein translocase subunit SecA (912 aa).

Residues Q87, 105-109, and D508 each bind ATP; that span reads GEGKT. A disordered region spans residues 864–912; it reads AEEEVEQMQGGNAPVPVSQVTRDEPKVGRNDPCPCGSGKKYKHCHGQLS. The Zn(2+) site is built by C896, C898, C907, and H908. The span at 902 to 912 shows a compositional bias: basic residues; sequence KKYKHCHGQLS.

The protein belongs to the SecA family. As to quaternary structure, monomer and homodimer. Part of the essential Sec protein translocation apparatus which comprises SecA, SecYEG and auxiliary proteins SecDF-YajC and YidC. The cofactor is Zn(2+).

The protein resides in the cell inner membrane. It is found in the cytoplasm. It catalyses the reaction ATP + H2O + cellular proteinSide 1 = ADP + phosphate + cellular proteinSide 2.. Functionally, part of the Sec protein translocase complex. Interacts with the SecYEG preprotein conducting channel. Has a central role in coupling the hydrolysis of ATP to the transfer of proteins into and across the cell membrane, serving both as a receptor for the preprotein-SecB complex and as an ATP-driven molecular motor driving the stepwise translocation of polypeptide chains across the membrane. The sequence is that of Protein translocase subunit SecA from Xanthomonas euvesicatoria pv. vesicatoria (strain 85-10) (Xanthomonas campestris pv. vesicatoria).